Consider the following 389-residue polypeptide: Phospho-N-acetylmuramoyl-pentapeptide-transferase (389 aa).

Transmembrane regions (helical) follow at residues 25-45 (RAVM…PFVI), 74-94 (MGGV…ADWG), 97-117 (FIWI…VDDY), 134-154 (FFWQ…SVSE), 190-210 (ISYP…IVGS), 222-242 (GLVI…AYVM), 259-279 (AGEL…FLWF), 286-306 (VFMG…IAVI), 311-331 (IVLF…MLQV), and 366-386 (QVVV…LSTL).

This sequence belongs to the glycosyltransferase 4 family. MraY subfamily. Mg(2+) serves as cofactor.

The protein resides in the cell inner membrane. It carries out the reaction UDP-N-acetyl-alpha-D-muramoyl-L-alanyl-gamma-D-glutamyl-meso-2,6-diaminopimeloyl-D-alanyl-D-alanine + di-trans,octa-cis-undecaprenyl phosphate = di-trans,octa-cis-undecaprenyl diphospho-N-acetyl-alpha-D-muramoyl-L-alanyl-D-glutamyl-meso-2,6-diaminopimeloyl-D-alanyl-D-alanine + UMP. It participates in cell wall biogenesis; peptidoglycan biosynthesis. In terms of biological role, catalyzes the initial step of the lipid cycle reactions in the biosynthesis of the cell wall peptidoglycan: transfers peptidoglycan precursor phospho-MurNAc-pentapeptide from UDP-MurNAc-pentapeptide onto the lipid carrier undecaprenyl phosphate, yielding undecaprenyl-pyrophosphoryl-MurNAc-pentapeptide, known as lipid I. In Ralstonia pickettii (strain 12J), this protein is Phospho-N-acetylmuramoyl-pentapeptide-transferase.